Here is a 270-residue protein sequence, read N- to C-terminus: Protein US2 homolog (270 aa).

It belongs to the herpesviridae US2 family.

This chain is Protein US2 homolog (MDV091), found in Gallid herpesvirus 2 (strain Chicken/Md5/ATCC VR-987) (GaHV-2).